We begin with the raw amino-acid sequence, 429 residues long: Asparagine--tRNA ligase (429 aa).

It belongs to the class-II aminoacyl-tRNA synthetase family. Homodimer.

Its subcellular location is the cytoplasm. The enzyme catalyses tRNA(Asn) + L-asparagine + ATP = L-asparaginyl-tRNA(Asn) + AMP + diphosphate + H(+). The sequence is that of Asparagine--tRNA ligase from Desulforamulus reducens (strain ATCC BAA-1160 / DSM 100696 / MI-1) (Desulfotomaculum reducens).